The sequence spans 1364 residues: Outer kinetochore KNL1 complex subunit spc7 (1364 aa).

Positions 1 to 15 are enriched in polar residues; sequence MPTSPRRNSIATTDN. Disordered regions lie at residues 1–36, 124–190, and 202–223; these read MPTSPRRNSIATTDNVIGRNKSRKRPHSLGGPGALQ, YPKD…DIAS, and EALNAGHPPPSLYPENDDLSIQ. Residues 124-136 are compositionally biased toward basic and acidic residues; it reads YPKDHQSDSEKST. Positions 157–169 are enriched in polar residues; the sequence is GPTTTSFSRNETQ. The span at 170–181 shows a compositional bias: low complexity; sequence SSPHSHSASIIS. Residues 254–257 carry the MELT; degenerate motif; sequence MDLT. Threonine 257 is subject to Phosphothreonine; by mph1. The interval 289–334 is disordered; sequence ASHDPSNQTQLSSPNKSSSPTSIEISDFSKNNENHDQSENKEEEED. The span at 300-310 shows a compositional bias: low complexity; that stretch reads SSPNKSSSPTS. Positions 318–328 are enriched in basic and acidic residues; that stretch reads KNNENHDQSEN. An MELT; degenerate motif is present at residues 450 to 453; it reads MDLT. Threonine 453 is subject to Phosphothreonine; by mph1. The disordered stretch occupies residues 456–503; the sequence is ISSTNAPTHLNEDDLNQFTSNISSSSKPRKDNNKTANSSKPIPDSEDF. The segment covering 471-481 has biased composition (polar residues); that stretch reads NQFTSNISSSS. The MELT; degenerate motif lies at 504 to 507; sequence MDIT. At threonine 507 the chain carries Phosphothreonine; by mph1. Disordered stretches follow at residues 564 to 643 and 697 to 837; these read LPSA…SSFD and GATP…GVSN. The segment covering 566-585 has biased composition (basic and acidic residues); sequence SADKENAEREEIPSYSDKSE. Polar residues predominate over residues 586-617; that stretch reads NFNTTSFTNHERSPNGNNNLKFSKDPNSSSPS. The segment covering 719 to 730 has biased composition (basic and acidic residues); the sequence is EVSRQPTDDKGE. A compositionally biased stretch (polar residues) spans 747 to 773; the sequence is LTIQQTNEIKHVPTNTTSSVKLPQQPS. Basic and acidic residues predominate over residues 791-802; sequence SLERLESQEPNR. Residues 808–820 show a composition bias toward polar residues; that stretch reads VGSSNAGNTTSVG. Residues 1075–1155 are a coiled coil; sequence LAQAQEKLEK…EEQLLNLKNE (81 aa). A Nuclear localization signal motif is present at residues 1091–1105; the sequence is RRRRLLSEKEERRKE.

Component of the KNL1/SPC105 complex composed of at least spc7 and sos7. Part of the outer kinetochore KMN network that includes the KNL1, MIS12 and NDC80 complexes. Interacts (via C-terminus) with sos7 (via C-terminus); the interaction is direct. Interacts (when phosphorylated on MELT motifs) with bub1 and bub3; to recruit the BUB1-BUB3 complex to the kinetochore. Post-translationally, phosphorylation of threonine residues in the MELT motifs by mph1/mps1 leads to recruitment of bub1 and bub3 to the kinetochore, and is required to maintain spindle assembly checkpoint signaling.

The protein resides in the nucleus. It localises to the chromosome. Its subcellular location is the centromere. The protein localises to the kinetochore. Its function is as follows. Acts as a component of the outer kinetochore KNL1 complex that serves as a docking point for spindle assembly checkpoint components and mediates microtubule-kinetochore interactions. Kinetochores, consisting of a centromere-associated inner segment and a microtubule-contacting outer segment, play a crucial role in chromosome segregation by mediating the physical connection between centromeric DNA and spindle microtubules. The outer kinetochore is made up of the ten-subunit KMN network, comprising the MIS12, NDC80 and KNL1 complexes, and auxiliary microtubule-associated components; together they connect the outer kinetochore with the inner kinetochore, bind microtubules, and mediate interactions with mitotic checkpoint proteins that delay anaphase until chromosomes are bioriented on the spindle. Recruits the BUB1-BUB3 complex to kinetochores when phosphorylated by mph1/mps1, to support spindle assembly checkpoint signaling. Functions both in mitotic and in meiotic chromosome segregation. The protein is Outer kinetochore KNL1 complex subunit spc7 of Schizosaccharomyces pombe (strain 972 / ATCC 24843) (Fission yeast).